A 546-amino-acid polypeptide reads, in one-letter code: Flavin-dependent oxygenase ucdF (546 aa).

One can recognise an FAD-binding PCMH-type domain in the interval 81–263 (QGRIPYYAVM…VNTTIRTFPD (183 aa)).

This sequence belongs to the oxygen-dependent FAD-linked oxidoreductase family.

In terms of biological role, nonribosomal peptide synthetase that mediates the biosynthesis of usterphenyllins and uscandidusins, p-terphenyl derivatives. The function of ucdF within the pathway still remains to be determined. UcdE further prenylates position C-14 of ring C of usterphenyllin B to form usterphenyllin A. The pathway begin with the biosynthesis of 4-hydroxyphenylpyruvate (HPPA) from L-tyrosine, possibly by the aminotransferase ucdG. The nonribosomal peptide synthetase ucdA then condenses two HPPA units to produce atromentin. The key step in this pathway is the reduction and dehydration of atromentin to form a terphenyl triol intermediate, performed by the NAD-dependent dehydrogenase ucdB. Further O-methylation by the methyltransferase ucdC forms terphenyllin carrying two methoxy moieties at C-9 and C-12, and subsequent dihydroxylation at C-3 of ring A and C-15 of ring C by the flavin-dependent oxygenase ucdD leads to 3,15-dihydroxyterphenyllin. Prenylation by ucdE at position C-5 of ring A forms usterphenyllin B, and is followed by a second prenylation at position C-14 of ring C to form usterphenyllin A. The following furan ring formation that leads to uscandidusins A and B was proven to be an unexpected spontaneous non-enzymatic reaction. This Aspergillus ustus protein is Flavin-dependent oxygenase ucdF.